Reading from the N-terminus, the 1429-residue chain is Gag-Pol polyprotein (1429 aa).

Residue Gly2 is the site of N-myristoyl glycine; by host attachment. The segment at 7 to 31 is interaction with Gp41; that stretch reads VLSGGKLDKWEKIQLRPGGKKKYRL. Positions 8–43 are interaction with host CALM1; sequence LSGGKLDKWEKIQLRPGGKKKYRLKHLVWASRELER. Residues 12-19 form an interaction with host AP3D1 region; the sequence is KLDKWEKI. Positions 14–33 are interaction with membrane phosphatidylinositol 4,5-bisphosphate and RNA; the sequence is DKWEKIQLRPGGKKKYRLKH. The short motif at 16–22 is the Nuclear export signal element; that stretch reads WEKIQLR. The Nuclear localization signal signature appears at 26 to 32; that stretch reads KKKYRLK. Residues 73-77 form an interaction with membrane phosphatidylinositol 4,5-bisphosphate region; the sequence is EELRS. The interval 105–124 is disordered; that stretch reads EEEQNRTQQKTQQGKADKGV. Over residues 110–124 the composition is skewed to polar residues; the sequence is RTQQKTQQGKADKGV. The residue at position 128 (Tyr128) is a Phosphotyrosine; by host. Residues 185-223 form an interaction with human PPIA/CYPA and NUP153 region; that stretch reads NTVGGHQAAMQMLKDTINEEAAEWDRMHPVQAGPIPPGQ. The dimerization/Multimerization of capsid protein p24 stretch occupies residues 273 to 359; the sequence is YSPVSILDIR…GGPGHKARVL (87 aa). 2 CCHC-type zinc fingers span residues 385-402 and 406-423; these read IKCF…NCRA and KGCW…DCSE. The segment at 439–479 is disordered; sequence EARKFSSEQTRANSPTSRELWVRGEDNPLSETGNERSGTGS. 2 stretches are compositionally biased toward polar residues: residues 445–455 and 467–479; these read SEQTRANSPTS and LSET…GTGS. The dimerization of protease stretch occupies residues 484-488; the sequence is PQITL. In terms of domain architecture, Peptidase A2 spans 503 to 572; sequence REALLDTGAD…TPVNIIGRNM (70 aa). The active-site For protease activity; shared with dimeric partner is the Asp508. 2 dimerization of protease regions span residues 532–538 and 571–583; these read GIGGFIK and NMLT…LNFP. The 191-residue stretch at 626–816 folds into the Reverse transcriptase domain; it reads EGKISKIGPE…PPFLWMGYEL (191 aa). 3 residues coordinate Mg(2+): Asp692, Asp767, and Asp768. Residues 809-817 are RT 'primer grip'; that stretch reads FLWMGYELH. A Tryptophan repeat motif motif is present at residues 980-996; that stretch reads WGTWWTEYWQATWIPEW. An RNase H type-1 domain is found at 1016-1139; it reads IVGAETFYVD…VDKLVSSGIR (124 aa). The Mg(2+) site is built by Asp1025, Glu1060, Asp1080, and Asp1131. An Integrase-type zinc finger spans residues 1145–1186; the sequence is DGIDKAQEEHEKYHNNWRAMASDFNLPPVVAKEIVASCDKCQ. The Zn(2+) site is built by His1154, His1158, Cys1182, and Cys1185. The Integrase catalytic domain maps to 1196-1346; that stretch reads VDCSPGIWQL…SAGERIIDII (151 aa). Mg(2+)-binding residues include Asp1206, Asp1258, and Glu1294. Positions 1365 to 1411 form a DNA-binding region, integrase-type; sequence FRVYYRDSREPIWKGPAKLLWKGEGAVVIQNSEIKVVPRRKAKIIRD.

Homotrimer; further assembles as hexamers of trimers. Interacts with gp41 (via C-terminus). Interacts with host CALM1; this interaction induces a conformational change in the Matrix protein, triggering exposure of the myristate group. Interacts with host AP3D1; this interaction allows the polyprotein trafficking to multivesicular bodies during virus assembly. Part of the pre-integration complex (PIC) which is composed of viral genome, matrix protein, Vpr and integrase. As to quaternary structure, homodimer; the homodimer further multimerizes as homohexamers or homopentamers. Interacts with human PPIA/CYPA; This interaction stabilizes the capsid. Interacts with human NUP153. Interacts with host PDZD8; this interaction stabilizes the capsid. Interacts with monkey TRIM5; this interaction destabilizes the capsid. In terms of assembly, homodimer, whose active site consists of two apposed aspartic acid residues. Heterodimer of p66 RT and p51 RT (RT p66/p51). Heterodimerization of RT is essential for DNA polymerase activity. The overall folding of the subdomains is similar in p66 RT and p51 RT but the spatial arrangements of the subdomains are dramatically different. As to quaternary structure, homotetramer; may further associate as a homohexadecamer. Part of the pre-integration complex (PIC) which is composed of viral genome, matrix protein, Vpr and integrase. Interacts with human SMARCB1/INI1 and human PSIP1/LEDGF isoform 1. Interacts with human KPNA3; this interaction might play a role in nuclear import of the pre-integration complex. Interacts with human NUP153; this interaction might play a role in nuclear import of the pre-integration complex. Requires Mg(2+) as cofactor. In terms of processing, specific enzymatic cleavages by the viral protease yield mature proteins. The protease is released by autocatalytic cleavage. The polyprotein is cleaved during and after budding, this process is termed maturation. Proteolytic cleavage of p66 RT removes the RNase H domain to yield the p51 RT subunit. Nucleocapsid protein p7 might be further cleaved after virus entry. Post-translationally, tyrosine phosphorylated presumably in the virion by a host kinase. Phosphorylation is apparently not a major regulator of membrane association. Phosphorylated possibly by host MAPK1; this phosphorylation is necessary for Pin1-mediated virion uncoating. In terms of processing, methylated by host PRMT6, impairing its function by reducing RNA annealing and the initiation of reverse transcription.

The protein resides in the host cell membrane. Its subcellular location is the host endosome. It localises to the host multivesicular body. The protein localises to the virion membrane. It is found in the host nucleus. The protein resides in the host cytoplasm. Its subcellular location is the virion. The catalysed reaction is Specific for a P1 residue that is hydrophobic, and P1' variable, but often Pro.. It catalyses the reaction Endohydrolysis of RNA in RNA/DNA hybrids. Three different cleavage modes: 1. sequence-specific internal cleavage of RNA. Human immunodeficiency virus type 1 and Moloney murine leukemia virus enzymes prefer to cleave the RNA strand one nucleotide away from the RNA-DNA junction. 2. RNA 5'-end directed cleavage 13-19 nucleotides from the RNA end. 3. DNA 3'-end directed cleavage 15-20 nucleotides away from the primer terminus.. It carries out the reaction 3'-end directed exonucleolytic cleavage of viral RNA-DNA hybrid.. The enzyme catalyses DNA(n) + a 2'-deoxyribonucleoside 5'-triphosphate = DNA(n+1) + diphosphate. Protease: The viral protease is inhibited by many synthetic protease inhibitors (PIs), such as amprenavir, atazanavir, indinavir, loprinavir, nelfinavir, ritonavir and saquinavir. Use of protease inhibitors in tritherapy regimens permit more ambitious therapeutic strategies. Reverse transcriptase/ribonuclease H: RT can be inhibited either by nucleoside RT inhibitors (NRTIs) or by non nucleoside RT inhibitors (NNRTIs). NRTIs act as chain terminators, whereas NNRTIs inhibit DNA polymerization by binding a small hydrophobic pocket near the RT active site and inducing an allosteric change in this region. Classical NRTIs are abacavir, adefovir (PMEA), didanosine (ddI), lamivudine (3TC), stavudine (d4T), tenofovir (PMPA), zalcitabine (ddC), and zidovudine (AZT). Classical NNRTIs are atevirdine (BHAP U-87201E), delavirdine, efavirenz (DMP-266), emivirine (I-EBU), and nevirapine (BI-RG-587). The tritherapies used as a basic effective treatment of AIDS associate two NRTIs and one NNRTI. In terms of biological role, mediates, with Gag polyprotein, the essential events in virion assembly, including binding the plasma membrane, making the protein-protein interactions necessary to create spherical particles, recruiting the viral Env proteins, and packaging the genomic RNA via direct interactions with the RNA packaging sequence (Psi). Gag-Pol polyprotein may regulate its own translation, by the binding genomic RNA in the 5'-UTR. At low concentration, the polyprotein would promote translation, whereas at high concentration, the polyprotein would encapsidate genomic RNA and then shut off translation. Functionally, targets the polyprotein to the plasma membrane via a multipartite membrane-binding signal, that includes its myristoylated N-terminus. Matrix protein is part of the pre-integration complex. Implicated in the release from host cell mediated by Vpu. Binds to RNA. Forms the conical core that encapsulates the genomic RNA-nucleocapsid complex in the virion. Most core are conical, with only 7% tubular. The core is constituted by capsid protein hexamer subunits. The core is disassembled soon after virion entry. Host restriction factors such as TRIM5-alpha or TRIMCyp bind retroviral capsids and cause premature capsid disassembly, leading to blocks in reverse transcription. Capsid restriction by TRIM5 is one of the factors which restricts HIV-1 to the human species. Host PIN1 apparently facilitates the virion uncoating. On the other hand, interactions with PDZD8 or CYPA stabilize the capsid. Its function is as follows. Encapsulates and protects viral dimeric unspliced genomic RNA (gRNA). Binds these RNAs through its zinc fingers. Acts as a nucleic acid chaperone which is involved in rearangement of nucleic acid secondary structure during gRNA retrotranscription. Also facilitates template switch leading to recombination. As part of the polyprotein, participates in gRNA dimerization, packaging, tRNA incorporation and virion assembly. In terms of biological role, aspartyl protease that mediates proteolytic cleavages of Gag and Gag-Pol polyproteins during or shortly after the release of the virion from the plasma membrane. Cleavages take place as an ordered, step-wise cascade to yield mature proteins. This process is called maturation. Displays maximal activity during the budding process just prior to particle release from the cell. Also cleaves Nef and Vif, probably concomitantly with viral structural proteins on maturation of virus particles. Hydrolyzes host EIF4GI and PABP1 in order to shut off the capped cellular mRNA translation. The resulting inhibition of cellular protein synthesis serves to ensure maximal viral gene expression and to evade host immune response. Also mediates cleavage of host YTHDF3. Mediates cleavage of host CARD8, thereby activating the CARD8 inflammasome, leading to the clearance of latent HIV-1 in patient CD4(+) T-cells after viral reactivation; in contrast, HIV-1 can evade CARD8-sensing when its protease remains inactive in infected cells prior to viral budding. Functionally, multifunctional enzyme that converts the viral RNA genome into dsDNA in the cytoplasm, shortly after virus entry into the cell. This enzyme displays a DNA polymerase activity that can copy either DNA or RNA templates, and a ribonuclease H (RNase H) activity that cleaves the RNA strand of RNA-DNA heteroduplexes in a partially processive 3' to 5' endonucleasic mode. Conversion of viral genomic RNA into dsDNA requires many steps. A tRNA(3)-Lys binds to the primer-binding site (PBS) situated at the 5'-end of the viral RNA. RT uses the 3' end of the tRNA primer to perform a short round of RNA-dependent minus-strand DNA synthesis. The reading proceeds through the U5 region and ends after the repeated (R) region which is present at both ends of viral RNA. The portion of the RNA-DNA heteroduplex is digested by the RNase H, resulting in a ssDNA product attached to the tRNA primer. This ssDNA/tRNA hybridizes with the identical R region situated at the 3' end of viral RNA. This template exchange, known as minus-strand DNA strong stop transfer, can be either intra- or intermolecular. RT uses the 3' end of this newly synthesized short ssDNA to perform the RNA-dependent minus-strand DNA synthesis of the whole template. RNase H digests the RNA template except for two polypurine tracts (PPTs) situated at the 5'-end and near the center of the genome. It is not clear if both polymerase and RNase H activities are simultaneous. RNase H probably can proceed both in a polymerase-dependent (RNA cut into small fragments by the same RT performing DNA synthesis) and a polymerase-independent mode (cleavage of remaining RNA fragments by free RTs). Secondly, RT performs DNA-directed plus-strand DNA synthesis using the PPTs that have not been removed by RNase H as primers. PPTs and tRNA primers are then removed by RNase H. The 3' and 5' ssDNA PBS regions hybridize to form a circular dsDNA intermediate. Strand displacement synthesis by RT to the PBS and PPT ends produces a blunt ended, linear dsDNA copy of the viral genome that includes long terminal repeats (LTRs) at both ends. Catalyzes viral DNA integration into the host chromosome, by performing a series of DNA cutting and joining reactions. This enzyme activity takes place after virion entry into a cell and reverse transcription of the RNA genome in dsDNA. The first step in the integration process is 3' processing. This step requires a complex comprising the viral genome, matrix protein, Vpr and integrase. This complex is called the pre-integration complex (PIC). The integrase protein removes 2 nucleotides from each 3' end of the viral DNA, leaving recessed CA OH's at the 3' ends. In the second step, the PIC enters cell nucleus. This process is mediated through integrase and Vpr proteins, and allows the virus to infect a non dividing cell. This ability to enter the nucleus is specific of lentiviruses, other retroviruses cannot and rely on cell division to access cell chromosomes. In the third step, termed strand transfer, the integrase protein joins the previously processed 3' ends to the 5' ends of strands of target cellular DNA at the site of integration. The 5'-ends are produced by integrase-catalyzed staggered cuts, 5 bp apart. A Y-shaped, gapped, recombination intermediate results, with the 5'-ends of the viral DNA strands and the 3' ends of target DNA strands remaining unjoined, flanking a gap of 5 bp. The last step is viral DNA integration into host chromosome. This involves host DNA repair synthesis in which the 5 bp gaps between the unjoined strands are filled in and then ligated. Since this process occurs at both cuts flanking the HIV genome, a 5 bp duplication of host DNA is produced at the ends of HIV-1 integration. Alternatively, Integrase may catalyze the excision of viral DNA just after strand transfer, this is termed disintegration. The chain is Gag-Pol polyprotein (gag-pol) from Homo sapiens (Human).